Consider the following 106-residue polypeptide: Nucleoid-associated protein Smal_0858 (106 aa).

The disordered stretch occupies residues 81–106; that stretch reads IDAESKSKMGSATAGMQLPPGMKLPF.

Belongs to the YbaB/EbfC family. Homodimer.

Its subcellular location is the cytoplasm. The protein localises to the nucleoid. Its function is as follows. Binds to DNA and alters its conformation. May be involved in regulation of gene expression, nucleoid organization and DNA protection. In Stenotrophomonas maltophilia (strain R551-3), this protein is Nucleoid-associated protein Smal_0858.